The primary structure comprises 433 residues: Gamma-glutamyl phosphate reductase (433 aa).

It belongs to the gamma-glutamyl phosphate reductase family.

It is found in the cytoplasm. It catalyses the reaction L-glutamate 5-semialdehyde + phosphate + NADP(+) = L-glutamyl 5-phosphate + NADPH + H(+). It functions in the pathway amino-acid biosynthesis; L-proline biosynthesis; L-glutamate 5-semialdehyde from L-glutamate: step 2/2. Its function is as follows. Catalyzes the NADPH-dependent reduction of L-glutamate 5-phosphate into L-glutamate 5-semialdehyde and phosphate. The product spontaneously undergoes cyclization to form 1-pyrroline-5-carboxylate. This Rhodopseudomonas palustris (strain BisB18) protein is Gamma-glutamyl phosphate reductase.